Consider the following 406-residue polypeptide: Peptide antibiotic transporter SbmA (406 aa).

Residues 1-11 (MFKSFFPKPGT) are Periplasmic-facing. The helical transmembrane segment at 12–32 (FFLSAFVWALIAVIFWQAGGG) threads the bilayer. Topologically, residues 33–56 (DWVARITGASGQIPISAARFWSLD) are cytoplasmic. A helical transmembrane segment spans residues 57-77 (FLIFYAYYIVCVGLFALFWFI). The Periplasmic portion of the chain corresponds to 78-87 (YSPHRWQYWS). The chain crosses the membrane as a helical span at residues 88–108 (ILGTALIIFVTWFLVEVGVAV). Residues 109–137 (NAWYAPFYDLIQTALSSPHKVTIEQFYRE) lie on the Cytoplasmic side of the membrane. Residues 138–158 (VGVFLGIALIAVVISVLNNFF) form a helical membrane-spanning segment. Residues 159–205 (VSHYVFRWRTAMNEYYMANWQQLRHIEGAAQRVQEDTMRFASTLENM) are Periplasmic-facing. A helical membrane pass occupies residues 206–226 (GVSFINAIMTLIAFLPVLVTL). The Cytoplasmic portion of the chain corresponds to 227–242 (SAHVPELPIIGHIPYG). The helical transmembrane segment at 243-263 (LVIAAIVWSLMGTGLLAVVGI) threads the bilayer. At 264–331 (KLPGLEFKNQ…ARILYLQVDN (68 aa)) the chain is on the periplasmic side. A helical membrane pass occupies residues 332-352 (VFGLFLLFPSIVAGTITLGLM). Residues 353–406 (TQITNVFGQVRGAFQYLINSWTTLVELMSIYKRLRSFEHELDGDKIQEVTHTLS) lie on the Cytoplasmic side of the membrane.

This sequence belongs to the peptide uptake permease (PUP) (TC 9.A.18) family.

The protein resides in the cell inner membrane. Uptake of antimicrobial peptides. The sequence is that of Peptide antibiotic transporter SbmA (sbmA) from Escherichia coli O157:H7.